Here is a 330-residue protein sequence, read N- to C-terminus: RNA polymerase sigma factor RpoS (330 aa).

The tract at residues 56-89 (DATQLYLGEIGYSPLLTAEEEVYFARRALRGDVA) is sigma-70 factor domain-1. A sigma-70 factor domain-2 region spans residues 94 to 164 (MIESNLRLVV…ERAIMNQTRT (71 aa)). The Interaction with polymerase core subunit RpoC signature appears at 118-121 (DLIE). The tract at residues 174 to 249 (ELNVYLRTAR…DEKENGPEDT (76 aa)) is sigma-70 factor domain-3. The segment at 262–315 (WLFELNAKQREVLARRFGLLGYEAATLEDVGREIGLTRERVRQIQVEGLRRLRE) is sigma-70 factor domain-4. Positions 288–307 (LEDVGREIGLTRERVRQIQV) form a DNA-binding region, H-T-H motif.

This sequence belongs to the sigma-70 factor family. RpoS subfamily. As to quaternary structure, interacts with the RNA polymerase core enzyme.

The protein resides in the cytoplasm. Sigma factors are initiation factors that promote the attachment of RNA polymerase to specific initiation sites and are then released. This sigma factor is the master transcriptional regulator of the stationary phase and the general stress response. In Shigella flexneri, this protein is RNA polymerase sigma factor RpoS.